The chain runs to 262 residues: NADPH-dependent 7-cyano-7-deazaguanine reductase (262 aa).

A substrate-binding site is contributed by 69–71 (IES). 71-72 (SK) is a binding site for NADPH. The active-site Thioimide intermediate is cysteine 170. The Proton donor role is filled by aspartate 177. 209-210 (HE) is a substrate binding site. 238–239 (RG) contributes to the NADPH binding site.

The protein belongs to the GTP cyclohydrolase I family. QueF type 2 subfamily. As to quaternary structure, homodimer.

The protein resides in the cytoplasm. It carries out the reaction 7-aminomethyl-7-carbaguanine + 2 NADP(+) = 7-cyano-7-deazaguanine + 2 NADPH + 3 H(+). It functions in the pathway tRNA modification; tRNA-queuosine biosynthesis. In terms of biological role, catalyzes the NADPH-dependent reduction of 7-cyano-7-deazaguanine (preQ0) to 7-aminomethyl-7-deazaguanine (preQ1). The sequence is that of NADPH-dependent 7-cyano-7-deazaguanine reductase from Buchnera aphidicola subsp. Schizaphis graminum (strain Sg).